The sequence spans 344 residues: Protein MENT (344 aa).

A signal peptide spans 1–22 (MVPAACMLLWALLLSLESRAAG). The segment covering 162–182 (DMRSPSSKTTVDLSSETTLQQ) has biased composition (polar residues). Residues 162 to 197 (DMRSPSSKTTVDLSSETTLQQWSTPGSTPSPWPKPS) are disordered.

Post-translationally, phosphorylation sites are present in the extracellular medium.

The protein resides in the secreted. Functionally, involved in control of cellular proliferation. Onconcogenic modifier contributing to the tumor suppressor function of DNMT3B. This is Protein MENT (Ment) from Rattus norvegicus (Rat).